The chain runs to 493 residues: Vacuolar-processing enzyme (493 aa).

The first 34 residues, 1–34, serve as a signal peptide directing secretion; it reads MAVHRSLLNKPTWCRVAFWWWMLVMVMRIQGTNG. Positions 35–53 are excised as a propeptide; the sequence is KEQDSVIKLPTQEVDAESD. The active site involves His-176. The active-site Nucleophile is Cys-218. Residues Cys-251 and Cys-265 are joined by a disulfide bond. Residue Asn-318 is glycosylated (N-linked (GlcNAc...) asparagine). 2 disulfides stabilise this stretch: Cys-429–Cys-459 and Cys-441–Cys-476.

Belongs to the peptidase C13 family.

Functionally, asparagine-specific endopeptidase involved in the processing of vacuolar seed protein precursors into the mature forms. This chain is Vacuolar-processing enzyme, found in Phaseolus vulgaris (Kidney bean).